Here is a 278-residue protein sequence, read N- to C-terminus: Keratin-associated protein 5-1 (278 aa).

A run of 8 repeats spans residues 42–45, 48–51, 130–133, 136–139, 142–145, 239–242, 258–261, and 268–271. The segment at 42 to 271 is 8 X 4 AA repeats of C-C-X-P; the sequence is CCVPVCCCKP…CCSQSSCCVP (230 aa).

This sequence belongs to the KRTAP type 5 family. In terms of assembly, interacts with hair keratins. As to expression, expressed in hair root but not in skin. Expressed also in lung, pancreas, ovary, testis.

In the hair cortex, hair keratin intermediate filaments are embedded in an interfilamentous matrix, consisting of hair keratin-associated protein (KRTAP), which are essential for the formation of a rigid and resistant hair shaft through their extensive disulfide bond cross-linking with abundant cysteine residues of hair keratins. The matrix proteins include the high-sulfur and high-glycine-tyrosine keratins. The chain is Keratin-associated protein 5-1 (KRTAP5-1) from Homo sapiens (Human).